Here is a 140-residue protein sequence, read N- to C-terminus: Short-chain diamines transporter (140 aa).

The next 4 membrane-spanning stretches (helical) occupy residues 7–27, 36–56, 79–99, and 105–125; these read IFHAVLFELMALAIIVPAAAL, LALVGIGLSLYTVVWNYIYNL, VGFEGGLIFISIPVIAWFLEI, and LMLEAGFLVFFLFYATGFNWL.

The protein belongs to the proteobacterial antimicrobial compound efflux (PACE) (TC 2.A.117) family.

It is found in the cell inner membrane. Mediates the efflux of short-chain diamines when energized by an electrochemical gradient. Confers resistance to chlorhexidine, benzalkonium, proflavine and acriflavine. Mediates efflux of both proflavine and acriflavine via an energy-dependent mechanism. This chain is Short-chain diamines transporter, found in Vibrio parahaemolyticus serotype O3:K6 (strain RIMD 2210633).